The primary structure comprises 66 residues: Large ribosomal subunit protein bL33c (66 aa).

This sequence belongs to the bacterial ribosomal protein bL33 family.

It localises to the plastid. Its subcellular location is the chloroplast. This is Large ribosomal subunit protein bL33c from Coffea arabica (Arabian coffee).